Here is a 296-residue protein sequence, read N- to C-terminus: Endonuclease 5 (296 aa).

A signal peptide spans 1-20 (MRLWIVSVLVLTHLVHGALC). 2 residues coordinate a divalent metal cation: tryptophan 21 and histidine 26. A substrate-binding site is contributed by 21-26 (WGKDGH). Cysteine 30 and cysteine 62 are disulfide-bonded. Aspartate 66 and histidine 81 together coordinate a divalent metal cation. Residues 66–72 (DEIKKLS), 81–84 (HYVN), and 91–96 (NYEYCR) each bind substrate. Disulfide bonds link cysteine 90–cysteine 243, cysteine 98–cysteine 108, and cysteine 223–cysteine 230. Substrate contacts are provided by asparagine 115 and tyrosine 133. Asparagine 115 is a glycosylation site (N-linked (GlcNAc...) asparagine). Residue asparagine 134 is glycosylated (N-linked (GlcNAc...) asparagine). Residues histidine 144, aspartate 148, and histidine 154 each contribute to the a divalent metal cation site. The tract at residues 144–193 (HYMGDVHQPLHTGFLGDLGGNTIIVNWYHNKSNLHHVWDNMIIDSALETY) is substrate binding. The N-linked (GlcNAc...) asparagine glycan is linked to asparagine 173. Residues histidine 178 and aspartate 182 each coordinate a divalent metal cation. The N-linked (GlcNAc...) asparagine glycan is linked to asparagine 195. The propeptide at 281-296 (ATLNRIFSAKPKLAGL) is removed in mature form.

The protein belongs to the nuclease type I family. As to quaternary structure, monomer. Zn(2+) is required as a cofactor.

It carries out the reaction Endonucleolytic cleavage to 5'-phosphomononucleotide and 5'-phosphooligonucleotide end-products.. In terms of biological role, hydrolyzes, with low efficiency, only single-stranded DNA and RNA without apparent specificity for bases. Endonuclease that recognizes and cleaves some mismatches with high efficiency, including heteroduplex double-stranded DNA; mostly efficient on T/G, A/G and G/G mismatches, less efficient for T/T and poorly efficient for C/C, A/A, T/C and A/C. This Arabidopsis thaliana (Mouse-ear cress) protein is Endonuclease 5.